Consider the following 225-residue polypeptide: Membrane protein (225 aa).

At 1-20 (MDNTTNCTLGTEQAVQLFKE) the chain is on the virion surface side. Residues 21–41 (YNLFVTAFLLFLTILLQYGYA) form a helical membrane-spanning segment. The Intravirion segment spans residues 42–51 (TRNKVIYILK). The helical transmembrane segment at 52 to 72 (MIVLWCFWPLNIAVGAISCIY) threads the bilayer. Residues 73–77 (PPNTG) are Virion surface-facing. Residues 78-98 (GLVAAIILTVFACLSFIGYWI) traverse the membrane as a helical segment. The Intravirion segment spans residues 99–225 (QSFRLFKRCR…VATGGSSLYT (127 aa)).

This sequence belongs to the gammacoronaviruses M protein family. As to quaternary structure, homomultimer. Interacts with envelope E protein in the budding compartment of the host cell, which is located between endoplasmic reticulum and the Golgi complex. Forms a complex with HE and S proteins. Interacts with nucleocapsid N protein. This interaction probably participates in RNA packaging into the virus.

Its subcellular location is the virion membrane. It localises to the host Golgi apparatus membrane. Functionally, component of the viral envelope that plays a central role in virus morphogenesis and assembly via its interactions with other viral proteins. The polypeptide is Membrane protein (Avian infectious bronchitis virus (strain 6/82) (IBV)).